The following is a 216-amino-acid chain: L-fuculose phosphate aldolase (216 aa).

Substrate-binding positions include 28-29, 43-44, and 71-72; these read GN, TG, and SS. The active-site Proton donor/acceptor is Glu-73. The Zn(2+) site is built by Glu-73, His-92, His-94, and His-155.

This sequence belongs to the aldolase class II family. AraD/FucA subfamily. Homotetramer. Zn(2+) serves as cofactor.

The enzyme catalyses L-fuculose 1-phosphate = (S)-lactaldehyde + dihydroxyacetone phosphate. Its pathway is carbohydrate degradation; L-fucose degradation; L-lactaldehyde and glycerone phosphate from L-fucose: step 3/3. In terms of biological role, involved in the degradation of L-fucose and D-arabinose. Catalyzes the reversible cleavage of L-fuculose 1-phosphate (Fuc1P) to yield dihydroxyacetone phosphate (DHAP) and L-lactaldehyde. The chain is L-fuculose phosphate aldolase from Haemophilus influenzae (strain ATCC 51907 / DSM 11121 / KW20 / Rd).